The chain runs to 125 residues: Large ribosomal subunit protein bL12 (125 aa).

Belongs to the bacterial ribosomal protein bL12 family. Homodimer. Part of the ribosomal stalk of the 50S ribosomal subunit. Forms a multimeric L10(L12)X complex, where L10 forms an elongated spine to which 2 to 4 L12 dimers bind in a sequential fashion. Binds GTP-bound translation factors.

Functionally, forms part of the ribosomal stalk which helps the ribosome interact with GTP-bound translation factors. Is thus essential for accurate translation. This chain is Large ribosomal subunit protein bL12, found in Campylobacter concisus (strain 13826).